The chain runs to 391 residues: Multidrug resistance protein MdtL (391 aa).

The Cytoplasmic portion of the chain corresponds to 1–3 (MSR). The helical transmembrane segment at 4–24 (FLICSFALVLLYPAGIDMYLV) threads the bilayer. Residues 25 to 41 (GLPRIAADLNASEAQLH) lie on the Periplasmic side of the membrane. A helical membrane pass occupies residues 42 to 62 (IAFSVYLAGMAAAMLFAGKVA). Topologically, residues 63–68 (DRSGRK) are cytoplasmic. Residues 69-89 (PVAIPGAALFIIASVFCSLAE) traverse the membrane as a helical segment. At 90 to 92 (TSA) the chain is on the periplasmic side. The chain crosses the membrane as a helical span at residues 93–113 (LFLAGRFLQGLGAGCCYVVAF). At 114–130 (AILRDTLDDRRRAKVLS) the chain is on the cytoplasmic side. The helical transmembrane segment at 131-151 (LLNGITCIIPVLAPVLGHLIM) threads the bilayer. The Periplasmic portion of the chain corresponds to 152–157 (LKFPWQ). The helical transmembrane segment at 158–178 (SLFWTMATMGIAVLMLSLFIL) threads the bilayer. The Cytoplasmic portion of the chain corresponds to 179 to 202 (KETRPAAPAASDKPRENSESLLNR). The chain crosses the membrane as a helical span at residues 203-222 (FFLSRVVITTLSVSVILTFV). At 223–244 (NTSPVLLMEIMGFERGEYATIM) the chain is on the periplasmic side. The chain crosses the membrane as a helical span at residues 245 to 265 (ALTAGVSMTVSFSTPFALGIF). The Cytoplasmic portion of the chain corresponds to 266–268 (KPR). Residues 269–289 (TLMITSQVLFLAAGITLAVSP) traverse the membrane as a helical segment. The Periplasmic portion of the chain corresponds to 290 to 292 (SHA). Residues 293-313 (VSLFGITLICAGFSVGFGVAM) form a helical membrane-spanning segment. The Cytoplasmic portion of the chain corresponds to 314–330 (SQALGPFSLRAGVASST). Residues 331–351 (LGIAQVCGSSLWIWLAAVVGI) traverse the membrane as a helical segment. Residues 352-355 (GAWN) lie on the Periplasmic side of the membrane. The helical transmembrane segment at 356–376 (MLIGILIACSIVSLLLIMFVA) threads the bilayer. At 377–391 (PGRPVAAHEEIHHHA) the chain is on the cytoplasmic side.

The protein belongs to the major facilitator superfamily. DHA1 family. MdtL (TC 2.A.1.2.22) subfamily.

The protein resides in the cell inner membrane. Confers resistance to chloramphenicol. This chain is Multidrug resistance protein MdtL, found in Escherichia coli O6:K15:H31 (strain 536 / UPEC).